The sequence spans 95 residues: Co-chaperonin GroES (95 aa).

Belongs to the GroES chaperonin family. In terms of assembly, heptamer of 7 subunits arranged in a ring. Interacts with the chaperonin GroEL.

It localises to the cytoplasm. Its function is as follows. Together with the chaperonin GroEL, plays an essential role in assisting protein folding. The GroEL-GroES system forms a nano-cage that allows encapsulation of the non-native substrate proteins and provides a physical environment optimized to promote and accelerate protein folding. GroES binds to the apical surface of the GroEL ring, thereby capping the opening of the GroEL channel. This is Co-chaperonin GroES from Chlorobium luteolum (strain DSM 273 / BCRC 81028 / 2530) (Pelodictyon luteolum).